The sequence spans 304 residues: Cell surface-binding protein OPG105 (304 aa).

Positions M1–G235 constitute an Alpha-carbonic anhydrase domain. At M1–T275 the chain is on the virion surface side. A helical transmembrane segment spans residues F276–M294. Residues S295–N304 are Intravirion-facing.

The protein belongs to the alpha-carbonic anhydrase family. As to quaternary structure, homodimer; disulfide-linked. Apparently non-glycosylated.

The protein localises to the virion membrane. Functionally, binds to chondroitin sulfate on the cell surface to provide virion attachment to target cell. In Homo sapiens (Human), this protein is Cell surface-binding protein OPG105 (OPG105).